A 1812-amino-acid polypeptide reads, in one-letter code: Protein virilizer homolog (1812 aa).

A2 carries the N-acetylalanine modification. Disordered regions lie at residues I132–S302 and K576–R596. 2 positions are modified to phosphoserine: S133 and S138. Pro residues predominate over residues P139–Q152. Basic and acidic residues predominate over residues K160 to Q169. S173 carries the phosphoserine modification. Over residues P174–P190 the composition is skewed to pro residues. The residue at position 184 (T184) is a Phosphothreonine. A Phosphoserine modification is found at S222. The segment covering D224–Q233 has biased composition (polar residues). Composition is skewed to acidic residues over residues Y234–D266 and I274–S302. Residues S584 to R596 are compositionally biased toward basic and acidic residues. Phosphotyrosine is present on Y914. S1579 bears the Phosphoserine mark. 2 disordered regions span residues H1616–P1635 and K1663–R1812. The span at G1689 to G1698 shows a compositional bias: gly residues. Phosphothreonine is present on T1708. R1723 bears the Omega-N-methylarginine mark. The span at R1723–N1748 shows a compositional bias: polar residues. R1741 carries the asymmetric dimethylarginine; alternate modification. R1741 bears the Omega-N-methylarginine; alternate mark. Residues R1773, R1775, and R1793 each carry the asymmetric dimethylarginine modification. Over residues G1788 to G1802 the composition is skewed to gly residues. Over residues R1803–R1812 the composition is skewed to basic residues.

Belongs to the vir family. Component of the WMM complex, a N6-methyltransferase complex composed of a catalytic subcomplex, named MAC, and of an associated subcomplex, named MACOM. The MAC subcomplex is composed of METTL3 and METTL14. The MACOM subcomplex is composed of WTAP, ZC3H13, CBLL1/HAKAI, VIRMA, and, in some cases of RBM15 (RBM15 or RBM15B). Interacts with WTAP. Also a component of a MACOM-like complex, named WTAP complex, composed of WTAP, ZC3H13, CBLL1, VIRMA, RBM15, BCLAF1 and THRAP3. Interacts with NUDT21 and CPSF6.

Its subcellular location is the nucleus speckle. It localises to the nucleus. The protein resides in the nucleoplasm. It is found in the cytoplasm. In terms of biological role, associated component of the WMM complex, a complex that mediates N6-methyladenosine (m6A) methylation of RNAs, a modification that plays a role in the efficiency of mRNA splicing and RNA processing. Acts as a key regulator of m6A methylation by promoting m6A methylation of mRNAs in the 3'-UTR near the stop codon: recruits the catalytic core components METTL3 and METTL14, thereby guiding m6A methylation at specific sites. Required for mRNA polyadenylation via its role in selective m6A methylation: m6A methylation of mRNAs in the 3'-UTR near the stop codon correlating with alternative polyadenylation (APA). This is Protein virilizer homolog from Homo sapiens (Human).